Here is a 243-residue protein sequence, read N- to C-terminus: METSLSELLDASAHIGHSTSKWNPKFFPFIHMTKKGIHIIDLIKTIQQISVACMFLKKEVRNGKRVLFVGTKNQASKVVEREAKKCQEFYINQRWPGGLLTNWPTIKLSLKKLQLLEEKEKLDHLGSTSKKEEASMKREIQKLNKYLNGIKGMKKPPDIIILVDPSREKTTISECQKLNIPTIGILDTNCNPKSVNVPIPANDDSIKAIDLIVSKLSTSIFKAKLENNQFIENSTENLNEHVK.

The protein belongs to the universal ribosomal protein uS2 family.

Its subcellular location is the plastid. It localises to the chloroplast. The sequence is that of Small ribosomal subunit protein uS2c (rps2) from Cyanidium caldarium (Red alga).